Consider the following 468-residue polypeptide: MEEHYYVSIDIGSSSVKTIVGEKFHNGINVIGTGQTYTSGIKNGLIDDFDIARQAIKDTIKKASIASGVDIKEVFLKLPIIGTEVYDESNEIDFYEDTEINGSHIEKVLEGIREKNDVQETEVINVFPIRFIVDKENEVSDPKELIARHSLKVEAGVIAIQKSILINMIKCVEACGVDVLDVYSDAYNYGSILTATEKELGACVIDIGEDVTQVAFYERGELVDADSIEMAGRDITDDIAQGLNTSYETAEKVKHQYGHAFYDSASDQDIFTVEQVDSDETVQYTQKDLSDFIEARVEEIFFEVFDVLQDLGLTKVNGGFIVTGGSANLLGVKELLSDMVSEKVRIHTPSQMGIRKPEFSSAISTISSSIAFDELLDYVTINYHDNEETEEDVIDVKDKDNESKLGGFDWFKRKTNKKDTHENEVESSDEEIYQSEDNHQEHKQNHEHVQDKDKEESKFKKLMKSLFE.

The tract at residues 416–468 (NKKDTHENEVESSDEEIYQSEDNHQEHKQNHEHVQDKDKEESKFKKLMKSLFE) is disordered. Positions 425–434 (VESSDEEIYQ) are enriched in acidic residues. Residues 436 to 459 (EDNHQEHKQNHEHVQDKDKEESKF) are compositionally biased toward basic and acidic residues.

Belongs to the FtsA/MreB family. As to quaternary structure, self-interacts. Interacts with FtsZ.

It is found in the cell membrane. Its function is as follows. Cell division protein that is involved in the assembly of the Z ring. May serve as a membrane anchor for the Z ring. The protein is Cell division protein FtsA of Staphylococcus aureus (strain MRSA252).